A 329-amino-acid polypeptide reads, in one-letter code: Tryptophan--tRNA ligase (329 aa).

Residues 9-11 (QPS) and 17-18 (GN) contribute to the ATP site. Positions 10–18 (PSGIPTIGN) match the 'HIGH' region motif. D133 serves as a coordination point for L-tryptophan. ATP contacts are provided by residues 145–147 (GDD), V184, and 193–197 (KMSKS). The 'KMSKS' region signature appears at 193-197 (KMSKS).

This sequence belongs to the class-I aminoacyl-tRNA synthetase family. As to quaternary structure, homodimer.

The protein resides in the cytoplasm. The catalysed reaction is tRNA(Trp) + L-tryptophan + ATP = L-tryptophyl-tRNA(Trp) + AMP + diphosphate + H(+). Its function is as follows. Catalyzes the attachment of tryptophan to tRNA(Trp). The sequence is that of Tryptophan--tRNA ligase from Staphylococcus aureus (strain MSSA476).